The primary structure comprises 514 residues: Maturase K (514 aa).

The protein belongs to the intron maturase 2 family. MatK subfamily.

The protein resides in the plastid. Its subcellular location is the chloroplast. Functionally, usually encoded in the trnK tRNA gene intron. Probably assists in splicing its own and other chloroplast group II introns. The protein is Maturase K of Tsuga canadensis (Eastern hemlock).